The following is a 540-amino-acid chain: MNREMTSSFLLLTFAICKLIIAVGLNVGPSELLRIGAIDVDGHFTVHPSDLASVSSDFGMLKSPEEPLAVLHPSSAEDVARLVRTAYGSATAFPVSARGHGHSINGQAAAGRNGVVVEMNHGVTGTPKPLVRPDEMYVDVWGGELWVDVLKKTLEHGLAPKSWTDYLYLTVGGTLSNAGISGQAFHHGPQISNVLELDVVTGKGEVMRCSEEENTRLFHGVLGGLGQFGIITRARISLEPAPQRVRWIRVLYSSFKVFTEDQEYLISMHGQLKFDYVEGFVIVDEGLVNNWRSSFFSPRNPVKISSVSSNGSVLYCLEITKNYHDSDSEIVDQEVEILMKKLNFIPTSVFTTDLQYVDFLDRVHKAELKLRSKNLWEVPHPWLNLFVPKSRISDFDKGVFKGILGNKTSGPILIYPMNKDKWDERSSAVTPDEEVFYLVALLRSALTDGEETQKLEYLKDQNRRILEFCEQAKINVKQYLPHHATQEEWVAHFGDKWDRFRSLKAEFDPRHILATGQRIFQNPSLSLFPPSSSSSSAASW.

The N-terminal stretch at 1–22 (MNREMTSSFLLLTFAICKLIIA) is a signal peptide. Residues 63–241 (SPEEPLAVLH…TRARISLEPA (179 aa)) enclose the FAD-binding PCMH-type domain. 3 residues coordinate FAD: Ala97, Gly99, and Gly101. Position 102 is a pros-8alpha-FAD histidine (His102). The FAD site is built by Ser103, Gln107, Asp165, Thr170, Ser176, Ile180, and Ile231. N-linked (GlcNAc...) asparagine glycosylation is found at Asn310 and Asn406. FAD is bound by residues Tyr479 and Gln517.

It belongs to the oxygen-dependent FAD-linked oxidoreductase family. FAD is required as a cofactor. As to expression, expressed in the developing leaf petioles and in the rib zone of the axillary shoot meristems. In roots, expressed in the vascular cylinder within the root apical meristem and only faintly detectable in the differentiated root.

It localises to the secreted. Its subcellular location is the extracellular space. The enzyme catalyses N(6)-dimethylallyladenine + A + H2O = 3-methyl-2-butenal + adenine + AH2. In terms of biological role, catalyzes the oxidation of cytokinins, a family of N(6)-substituted adenine derivatives that are plant hormones, where the substituent is an isopentenyl group. In association with CKX3 regulates the activity of the reproductive meristems, flower organ size and ovule formation. This Arabidopsis thaliana (Mouse-ear cress) protein is Cytokinin dehydrogenase 5 (CKX5).